The sequence spans 245 residues: NAD-dependent protein deacetylase (245 aa).

One can recognise a Deacetylase sirtuin-type domain in the interval 1-245 (MLLLDKINEL…SIGKVLETVI (245 aa)). The NAD(+) site is built by alanine 26, threonine 30, phenylalanine 37, arginine 38, glutamine 107, isoleucine 109, aspartate 110, and histidine 125. Position 37 (phenylalanine 37) interacts with nicotinamide. Positions 109 and 110 each coordinate nicotinamide. Histidine 125 serves as the catalytic Proton acceptor. Zn(2+) contacts are provided by cysteine 133, cysteine 136, cysteine 155, and cysteine 158. 4 residues coordinate NAD(+): threonine 196, serine 197, asparagine 219, and isoleucine 237.

This sequence belongs to the sirtuin family. Class U subfamily. Zn(2+) is required as a cofactor.

The protein localises to the cytoplasm. The catalysed reaction is N(6)-acetyl-L-lysyl-[protein] + NAD(+) + H2O = 2''-O-acetyl-ADP-D-ribose + nicotinamide + L-lysyl-[protein]. Functionally, NAD-dependent protein deacetylase which modulates the activities of several enzymes which are inactive in their acetylated form. This chain is NAD-dependent protein deacetylase, found in Clostridium acetobutylicum (strain ATCC 824 / DSM 792 / JCM 1419 / IAM 19013 / LMG 5710 / NBRC 13948 / NRRL B-527 / VKM B-1787 / 2291 / W).